The sequence spans 295 residues: Caffeine dehydrogenase subunit beta (295 aa).

Residues 1–178 (MKPTAFDYIR…CEIRIPVPSQ (178 aa)) form the FAD-binding PCMH-type domain. Residues 32–36 (AGGQS) and 111–115 (TLGGN) contribute to the FAD site.

In terms of assembly, heterotrimer composed of an alpha (CdhA), a beta (CdhB) and a gamma (CdhC) subunit.

It carries out the reaction caffeine + a ubiquinone + H2O = 1,3,7-trimethylurate + a ubiquinol. It catalyses the reaction ubiquinone-0 + caffeine + H2O = ubiquinol-0 + 1,3,7-trimethylurate. The enzyme catalyses theobromine + a ubiquinone + H2O = 3,7-dimethylurate + a ubiquinol. Its function is as follows. Component of the caffeine dehydrogenase complex that catalyzes the hydrolytical oxidation of 1,3,7-trimethylxanthine (caffeine) by incorporation of an oxygen atom originating from a water molecule into position C-8 to produce 1,3,7-trimethyluric acid (TMU). Coenzyme Q0 (ubiquinone-0) is the preferred electron acceptor and, to a lesser extent, coenzyme Q2 (ubiquinone-2) can also be used, but oxygen and NAD(P)(+) cannot. Is involved in a caffeine degradation pathway that allows Pseudomonas sp. strain CBB1 to grow on caffeine as the sole carbon and nitrogen source. Is also active with theobromine as substrate, but shows a very poor activity with theophylline and is not active with xanthine, 3-methylxanthine, 7-methylxanthine, TMU, and 3,7-dimethylurate. This chain is Caffeine dehydrogenase subunit beta, found in Pseudomonas sp. (strain CBB1).